We begin with the raw amino-acid sequence, 443 residues long: UDP-N-acetylmuramate--L-alanine ligase (443 aa).

An ATP-binding site is contributed by 110–116 (GAHGKTS).

It belongs to the MurCDEF family.

The protein resides in the cytoplasm. It catalyses the reaction UDP-N-acetyl-alpha-D-muramate + L-alanine + ATP = UDP-N-acetyl-alpha-D-muramoyl-L-alanine + ADP + phosphate + H(+). It functions in the pathway cell wall biogenesis; peptidoglycan biosynthesis. Its function is as follows. Cell wall formation. This chain is UDP-N-acetylmuramate--L-alanine ligase, found in Lactococcus lactis subsp. cremoris (strain SK11).